Here is a 246-residue protein sequence, read N- to C-terminus: uncharacterized protein (246 aa).

The helical transmembrane segment at 7–29 (GRGALASTGGCVVLAVAALMFVF) threads the bilayer.

Its subcellular location is the membrane. This is an uncharacterized protein from Treponema pallidum (strain Nichols).